A 251-amino-acid chain; its full sequence is Lactose phosphotransferase system repressor (251 aa).

The 56-residue stretch at 3 to 58 (KHERLDEIAKLVNKKGTIRTNEIVEGLNVSDMTVRRDLIELENKGILTKIHGGARS) folds into the HTH deoR-type domain. Residues 20–39 (IRTNEIVEGLNVSDMTVRRD) constitute a DNA-binding region (H-T-H motif).

Functionally, repressor of the lactose catabolism operon. Galactose-6-phosphate is the inducer. This Staphylococcus aureus (strain N315) protein is Lactose phosphotransferase system repressor (lacR).